A 150-amino-acid chain; its full sequence is D-aminoacyl-tRNA deacylase (150 aa).

Positions 137 to 138 (GP) match the Gly-cisPro motif, important for rejection of L-amino acids motif.

Belongs to the DTD family. As to quaternary structure, homodimer.

The protein resides in the cytoplasm. It carries out the reaction glycyl-tRNA(Ala) + H2O = tRNA(Ala) + glycine + H(+). It catalyses the reaction a D-aminoacyl-tRNA + H2O = a tRNA + a D-alpha-amino acid + H(+). In terms of biological role, an aminoacyl-tRNA editing enzyme that deacylates mischarged D-aminoacyl-tRNAs. Also deacylates mischarged glycyl-tRNA(Ala), protecting cells against glycine mischarging by AlaRS. Acts via tRNA-based rather than protein-based catalysis; rejects L-amino acids rather than detecting D-amino acids in the active site. By recycling D-aminoacyl-tRNA to D-amino acids and free tRNA molecules, this enzyme counteracts the toxicity associated with the formation of D-aminoacyl-tRNA entities in vivo and helps enforce protein L-homochirality. This Heliobacterium modesticaldum (strain ATCC 51547 / Ice1) protein is D-aminoacyl-tRNA deacylase.